Consider the following 161-residue polypeptide: Small ribosomal subunit protein uS9 (161 aa).

It belongs to the universal ribosomal protein uS9 family.

The protein is Small ribosomal subunit protein uS9 of Methylobacterium radiotolerans (strain ATCC 27329 / DSM 1819 / JCM 2831 / NBRC 15690 / NCIMB 10815 / 0-1).